The primary structure comprises 305 residues: Ribosomal RNA large subunit methyltransferase F (305 aa).

Belongs to the methyltransferase superfamily. METTL16/RlmF family.

It localises to the cytoplasm. The catalysed reaction is adenosine(1618) in 23S rRNA + S-adenosyl-L-methionine = N(6)-methyladenosine(1618) in 23S rRNA + S-adenosyl-L-homocysteine + H(+). Functionally, specifically methylates the adenine in position 1618 of 23S rRNA. This chain is Ribosomal RNA large subunit methyltransferase F, found in Bacteroides fragilis (strain YCH46).